The chain runs to 140 residues: ATP synthase epsilon chain (140 aa).

Belongs to the ATPase epsilon chain family. As to quaternary structure, F-type ATPases have 2 components, CF(1) - the catalytic core - and CF(0) - the membrane proton channel. CF(1) has five subunits: alpha(3), beta(3), gamma(1), delta(1), epsilon(1). CF(0) has three main subunits: a, b and c.

The protein resides in the cell inner membrane. In terms of biological role, produces ATP from ADP in the presence of a proton gradient across the membrane. This Laribacter hongkongensis (strain HLHK9) protein is ATP synthase epsilon chain.